Consider the following 225-residue polypeptide: UPF0758 protein Shewmr4_3597 (225 aa).

The 123-residue stretch at 102 to 224 (VLTNPDLTRD…IVSFAERGWI (123 aa)) folds into the MPN domain. Residues H173, H175, and D186 each coordinate Zn(2+). Residues 173 to 186 (HNHPSGIAEPSQAD) carry the JAMM motif motif.

It belongs to the UPF0758 family.

This chain is UPF0758 protein Shewmr4_3597, found in Shewanella sp. (strain MR-4).